Reading from the N-terminus, the 424-residue chain is UPF0229 protein Avin_46880 (424 aa).

The interval 57-108 (RDIDEPVLHHGRGGKQTIVHPGNKEFTAGERIPRPSGGGGGGSGSGKASNSG) is disordered. Positions 92 to 101 (SGGGGGGSGS) are enriched in gly residues.

It belongs to the UPF0229 family.

This chain is UPF0229 protein Avin_46880, found in Azotobacter vinelandii (strain DJ / ATCC BAA-1303).